Here is a 332-residue protein sequence, read N- to C-terminus: Aquaporin Lacbi1:317173 (332 aa).

Residues 1-20 (MSGQHQITEQSSRNPLSRVS) show a composition bias toward polar residues. A disordered region spans residues 1–45 (MSGQHQITEQSSRNPLSRVSTLLPEKPLSPTSTYAGTQKHPEAPR). Residues 1-66 (MSGQHQITEQ…RNAIRKPMAE (66 aa)) lie on the Cytoplasmic side of the membrane. The chain crosses the membrane as a helical span at residues 67-87 (FFGVALLIIFGAGSACQVVLS). Residues 88–100 (TNPDVASSARGSF) are Extracellular-facing. Residues 101 to 121 (LSINFGWAIGIAMGVWVSGGI) traverse the membrane as a helical segment. Over 122–144 (SGGHINPAITIAMATYRGFPWRK) the chain is Cytoplasmic. Positions 127–129 (NPA) match the NPA 1 motif. The chain crosses the membrane as a helical span at residues 145 to 165 (VPSYILAQVLGGVVGAGLVYA). Over 166 to 199 (NYIHAIDIFEGGHHIRTQATASLFATYALPYMTQ) the chain is Extracellular. Residues 200 to 220 (ASCFFSEFLATAVLSMMVFAL) traverse the membrane as a helical segment. The Cytoplasmic portion of the chain corresponds to 221-230 (TDKRNHSPTN). The chain crosses the membrane as a helical span at residues 231-251 (GLLPFALFILFVGLGASLGME). Topologically, residues 252 to 283 (TAYALNPARDFGPRLFLAMAGYGKALFNYRSQ) are extracellular. The NPA 2 signature appears at 257-259 (NPA). The chain crosses the membrane as a helical span at residues 284–304 (YWLWAPIIAPVLGAQAGGLLY). Over 305-332 (DTFLNDGDNSPIKWRCASSQEHQLAEVV) the chain is Cytoplasmic.

It belongs to the MIP/aquaporin (TC 1.A.8) family.

It localises to the membrane. It catalyses the reaction H2O(in) = H2O(out). The catalysed reaction is NH4(+)(in) = NH4(+)(out). In terms of biological role, water channel required to facilitate the transport of water across membranes. Acts as the most efficient Laccaria water channel. In addition to water, also shows strong ammonium transport activity. May be involved in fungal nitrogen (ammonium) support of the plant host in symbiosis. The chain is Aquaporin Lacbi1:317173 from Laccaria bicolor (strain S238N-H82 / ATCC MYA-4686) (Bicoloured deceiver).